A 606-amino-acid polypeptide reads, in one-letter code: MDDQNKNLILATALSFIVILVWFVLFPPPEPEMPLTGETSTELTPDAATGSLPSVTSDTAPSVVIEGETRSAALEQAPRVEIATDRVKGSISLLGGRIDDLSLKDYRETQEEDADIVTMLSPVGSPGAYYALYGWAAGAGVDPSQVPGPDTEWQVIDGDILSVDAPVTLQWDNGAGLSFTRIIEIDDNYMFQITQSVANTSDAPVTVAPYGILARHGEPDDLKNFFILHEGVVAMADGELTETNWDDIPEFPVDQREGVPAERIENVLNGWIGFTDHFWMSVLIPDPSASARLTTKYRPRADIYQAETVLPAQTVAPGTSVSATTQLFAGAKEWETIRNYQTDGVDRFIDSIDWGWFFFLTKPIFFLLHYLNAFIGNMGWAIIGLTLIIKAILLPLAYKSYVSMAKMKELQPQMEKLKEEAGDDRQKMQQGMMELYKKEKVNPAAGCLPILLQIPIFFSLYKVIFVTIELRHAPFFGPFQDLSAPDPTSIMNLYGLLPFDGPEPGSIMALIFIGILPLLLGISMWLQQKLNPAPTDPTQQMIFAWMPWVFMFMLGGFASGLVVYWIANNTITFVQQYMIMRSQGYKPDVFGNIKGGFQKKTKPDSK.

A helical transmembrane segment spans residues 8 to 28 (LILATALSFIVILVWFVLFPP). The disordered stretch occupies residues 33–59 (MPLTGETSTELTPDAATGSLPSVTSDT). 6 helical membrane passes run 116–136 (IVTM…YGWA), 348–368 (FIDS…FFLL), 374–394 (FIGN…AILL), 448–468 (LPIL…FVTI), 506–526 (SIMA…SMWL), and 542–562 (IFAW…SGLV).

It belongs to the OXA1/ALB3/YidC family. Type 1 subfamily. Interacts with the Sec translocase complex via SecD. Specifically interacts with transmembrane segments of nascent integral membrane proteins during membrane integration.

The protein localises to the cell inner membrane. Its function is as follows. Required for the insertion and/or proper folding and/or complex formation of integral membrane proteins into the membrane. Involved in integration of membrane proteins that insert both dependently and independently of the Sec translocase complex, as well as at least some lipoproteins. Aids folding of multispanning membrane proteins. The sequence is that of Membrane protein insertase YidC from Roseobacter denitrificans (strain ATCC 33942 / OCh 114) (Erythrobacter sp. (strain OCh 114)).